The following is an 89-amino-acid chain: Large ribosomal subunit protein bL27 (89 aa).

The disordered stretch occupies residues 1 to 21 (MAHKKSGGSSSNGRDSESKRL).

It belongs to the bacterial ribosomal protein bL27 family.

The chain is Large ribosomal subunit protein bL27 from Caulobacter vibrioides (strain NA1000 / CB15N) (Caulobacter crescentus).